We begin with the raw amino-acid sequence, 333 residues long: Protoheme IX farnesyltransferase (333 aa).

The next 8 helical transmembrane spans lie at V31 to H51, P52 to L72, M115 to F135, I152 to G172, A178 to L198, K223 to G243, L244 to A264, and L303 to V323.

This sequence belongs to the UbiA prenyltransferase family. Protoheme IX farnesyltransferase subfamily.

The protein localises to the cell inner membrane. It carries out the reaction heme b + (2E,6E)-farnesyl diphosphate + H2O = Fe(II)-heme o + diphosphate. The protein operates within porphyrin-containing compound metabolism; heme O biosynthesis; heme O from protoheme: step 1/1. Functionally, converts heme B (protoheme IX) to heme O by substitution of the vinyl group on carbon 2 of heme B porphyrin ring with a hydroxyethyl farnesyl side group. The sequence is that of Protoheme IX farnesyltransferase from Caulobacter vibrioides (strain ATCC 19089 / CIP 103742 / CB 15) (Caulobacter crescentus).